Here is a 446-residue protein sequence, read N- to C-terminus: Chromosomal replication initiator protein DnaA (446 aa).

Residues 1 to 82 are domain I, interacts with DnaA modulators; the sequence is MENILDLWNQ…ELSIKFVIPQ (82 aa). The interval 83-103 is domain II; that stretch reads NQDVEDFMPKPQVKKAVKEDT. The domain III, AAA+ region stretch occupies residues 104–332; that stretch reads SDFPQNMLNP…VAYSSLINKD (229 aa). ATP contacts are provided by G154, L155, G156, K157, and T158. T158 is a Mg(2+) binding site. The Initiator specific motif (ISM) motif lies at 182–206; it reads SEKFTNEFINSIRDNKAVDFRNRYR. Residues D214 and D215 each coordinate Mg(2+). The segment at 333–346 is linker; sequence INADLAAEALKDII. Residues 347–446 are domain IV, binds dsDNA; that stretch reads PSSKPKVITI…HVKEIKEQLK (100 aa).

The protein belongs to the DnaA family. As to quaternary structure, the DNA replisome assembles sequentially on oriC in this order; DnaA, DnaD, DnaB, DnaI-DnaC helicase. Oligomerizes as a right-handed, spiral filament on DNA at oriC. Forms an ATP-dependent helix on DNA at oriC; both DnaD and YabA inhibit formation of the DnaA helix. Forms an ATP-dependent oligomer, formation is stimulated by ds- and ssDNA; monomeric ADP-Soj inhibits oligomer formation. Interacts with DnaD. Interacts with YabA, and via YabA, with the replication machinery subunit beta sliding clamp DnaN. Interacts with YabA via domain IIIa (residues 109-275). Isolated domain I forms a 1:1 complex with SirA. Interacts with Soj, probably via domain III. Interacts via domains I and III with CcrZ. Interacts via domain IV with skin prophage-like element protein YqaH.

The protein resides in the cytoplasm. It localises to the nucleoid. It catalyses the reaction ATP + H2O = ADP + phosphate + H(+). Its activity is regulated as follows. Oligomerization of DnaA can be controlled by Soj; monomeric ADP-Soj inhibits formation of the DnaA helix. YabA prevents the cooperative binding of DnaA-ATP to oriC-containing sequences; increased levels of DnaN (beta sliding clamp subunit of DNA polymerase) removes YabA from association with DnaA on the chromosome, enabling increased association of DnaA with its chromosomal binding sites. Both Soj and YabA chase DnaA from oriC site, YabA tethers DnaA to the DNA replication fork via the beta sliding clamp subunit DnaN. SirA antagonizes the ability of DnaA to bind to the replication origin, and thus decreases replication inititation during sporulation. Small protein YqaH, part of the skin prophage-like element, binds to DnaA and antagonizes its replication initiation and transcriptional regulation activities. Functionally, plays an essential role in the initiation and regulation of chromosomal replication. ATP-DnaA binds to the origin of replication (oriC) to initiate formation of the DNA replication initiation complex once per cell cycle. Binds directly to oriC at a 9 bp consensus (DnaA box): 5'-TTATCCACA-3' and separates the double-stranded (ds)DNA. Forms a right-handed helical filament on oriC DNA; dsDNA binds to the exterior of the filament while single-stranded (ss)DNA is stabilized in the filament's interior. The ATP-DnaA-oriC complex binds and stabilizes one strand of the AT-rich DNA unwinding element (DUE or basal unwinding system, BUS), permitting loading of DNA polymerase. Binds ATP with high affinity, ADP with lower affinity, but not AMP, cAMP or cGMP; ATP stimulates binding to DnaA boxes. Once bound promotes sequence-specific strand separation of DnaA-trios (3'-GAT-5' consensus) adjacent to oriC in the presence of ATP but not ADP. Domains III and IV are sufficient to separate dsDNA strands. The 'initiator specific motif' (ISM) of domain III contacts the middle adenine residue of the DnaA-trio probably stretching and stabilizing ssDNA. DnaA-trio recognition is co-operative and depends on DnaA self-assembly. The ssDNA serves as an assembly region for the replication machinery. Tethered to DnaN (beta sliding clamp subunit of DNA polymerase) and thus replication forks by YabA. During replication initiation DnaA-ATP binds cooperatively to sequences in oriC. YabA prevents this cooperative binding while still allowing DnaA to bind DNA. During the cell cycle an initial phase occurs in which DnaA is associated with origin regions, then the origin regions become spatially separate from the centrally sequestered DnaA molecules, and most DnaA molecules are unable to reassociate with origin regions. Does not require YabA to bind DNA. During sporulation SirA prevents DnaA association with the replication origin to prevent excessive chromosome replication. Overexpression induces the SOS response; increasing expression of downstream dnaN blocks this induction. Over-initiation of DNA replication is very deleterious; isolated suppressors in relA, ndrR, dnaC, cshA and crrZ increase replication elongation, decrease replication inititation or lead to a decrease in the replicative DNA helicase. Binds acidic phospholipids. The half-life of ADP-DnaA is 1.5 minutes, of ATP-DnaA is 5 minutes at 37 degrees Celsius; in E.coli the half-life of ADP-DnaA is about 45 minutes. In terms of biological role, also acts as a transcriptional regulator. DnaA inhibits its own gene expression. DnaA binds specifically to the promoter regions of at least 20 operons (56 genes), including itself, sda and dnaB, and probably controls their expression in response to DNA replication inhibition. The polypeptide is Chromosomal replication initiator protein DnaA (Bacillus subtilis (strain 168)).